The chain runs to 335 residues: Mitochondrial carrier protein CoAc2 (335 aa).

6 helical membrane-spanning segments follow: residues 12 to 32 (SGPG…AGGV), 75 to 95 (FYRG…LHYM), 119 to 139 (LVAG…LDLV), 187 to 207 (GMAP…YFYE), 225 to 242 (LGCG…TYPL), and 280 to 302 (LFSG…FTVY). Solcar repeat units follow at residues 17-103 (PLAV…YRRW), 113-212 (QGPV…MKSH), and 219-308 (KGII…MKVC).

It belongs to the mitochondrial carrier (TC 2.A.29) family. As to expression, expressed throughout the plant.

It localises to the mitochondrion inner membrane. Required for the accumulation of coenzyme A in the mitochondrial matrix. The polypeptide is Mitochondrial carrier protein CoAc2 (Zea mays (Maize)).